The sequence spans 413 residues: DNA primase DnaG (413 aa).

The 79-residue stretch at 168–246 (PNLIIVEGRA…KIDYVARAPV (79 aa)) folds into the Toprim domain. Residues glutamate 174, aspartate 219, and aspartate 221 each coordinate Mg(2+).

Belongs to the archaeal DnaG primase family. Forms a ternary complex with MCM helicase and DNA. Component of the archaeal exosome complex. It depends on Mg(2+) as a cofactor.

It carries out the reaction ssDNA + n NTP = ssDNA/pppN(pN)n-1 hybrid + (n-1) diphosphate.. RNA polymerase that catalyzes the synthesis of short RNA molecules used as primers for DNA polymerase during DNA replication. Also part of the exosome, which is a complex involved in RNA degradation. Acts as a poly(A)-binding protein that enhances the interaction between heteromeric, adenine-rich transcripts and the exosome. This is DNA primase DnaG from Metallosphaera sedula (strain ATCC 51363 / DSM 5348 / JCM 9185 / NBRC 15509 / TH2).